A 121-amino-acid chain; its full sequence is Fluoride-specific ion channel FluC 2 (121 aa).

The next 4 helical transmembrane spans lie at 3-23, 27-47, 64-84, and 92-112; these read YLFVFIGGLFGALLRYVLSTL, SGLPLGTLIANIVGAFLMGYL, GVTTGLLGALTTFSTFQFELV, and IALLFIYGLTSYIGGILFCWF. The Na(+) site is built by glycine 71 and threonine 74.

This sequence belongs to the fluoride channel Fluc/FEX (TC 1.A.43) family.

The protein resides in the cell membrane. It carries out the reaction fluoride(in) = fluoride(out). With respect to regulation, na(+) is not transported, but it plays an essential structural role and its presence is essential for fluoride channel function. Functionally, fluoride-specific ion channel. Important for reducing fluoride concentration in the cell, thus reducing its toxicity. The protein is Fluoride-specific ion channel FluC 2 of Staphylococcus haemolyticus (strain JCSC1435).